Reading from the N-terminus, the 157-residue chain is SsrA-binding protein (157 aa).

The segment at 132 to 157 (VHDKRQAQKDKDWAREKDRLFKKAYK) is disordered. Basic and acidic residues predominate over residues 135–157 (KRQAQKDKDWAREKDRLFKKAYK).

The protein belongs to the SmpB family.

The protein localises to the cytoplasm. Functionally, required for rescue of stalled ribosomes mediated by trans-translation. Binds to transfer-messenger RNA (tmRNA), required for stable association of tmRNA with ribosomes. tmRNA and SmpB together mimic tRNA shape, replacing the anticodon stem-loop with SmpB. tmRNA is encoded by the ssrA gene; the 2 termini fold to resemble tRNA(Ala) and it encodes a 'tag peptide', a short internal open reading frame. During trans-translation Ala-aminoacylated tmRNA acts like a tRNA, entering the A-site of stalled ribosomes, displacing the stalled mRNA. The ribosome then switches to translate the ORF on the tmRNA; the nascent peptide is terminated with the 'tag peptide' encoded by the tmRNA and targeted for degradation. The ribosome is freed to recommence translation, which seems to be the essential function of trans-translation. This Francisella tularensis subsp. novicida (strain U112) protein is SsrA-binding protein.